The chain runs to 356 residues: Dual-specificity RNA methyltransferase RlmN (356 aa).

The active-site Proton acceptor is the E92. A Radical SAM core domain is found at 98–327; the sequence is EKNRGTLCIS…HQGIRTMTRR (230 aa). Cysteines 105 and 337 form a disulfide. Positions 112, 116, and 119 each coordinate [4Fe-4S] cluster. S-adenosyl-L-methionine-binding positions include 162–163, S194, 216–218, and N294; these read GE and SLH. C337 functions as the S-methylcysteine intermediate in the catalytic mechanism.

It belongs to the radical SAM superfamily. RlmN family. Requires [4Fe-4S] cluster as cofactor.

Its subcellular location is the cytoplasm. The catalysed reaction is adenosine(2503) in 23S rRNA + 2 reduced [2Fe-2S]-[ferredoxin] + 2 S-adenosyl-L-methionine = 2-methyladenosine(2503) in 23S rRNA + 5'-deoxyadenosine + L-methionine + 2 oxidized [2Fe-2S]-[ferredoxin] + S-adenosyl-L-homocysteine. It carries out the reaction adenosine(37) in tRNA + 2 reduced [2Fe-2S]-[ferredoxin] + 2 S-adenosyl-L-methionine = 2-methyladenosine(37) in tRNA + 5'-deoxyadenosine + L-methionine + 2 oxidized [2Fe-2S]-[ferredoxin] + S-adenosyl-L-homocysteine. Functionally, specifically methylates position 2 of adenine 2503 in 23S rRNA and position 2 of adenine 37 in tRNAs. m2A2503 modification seems to play a crucial role in the proofreading step occurring at the peptidyl transferase center and thus would serve to optimize ribosomal fidelity. This chain is Dual-specificity RNA methyltransferase RlmN, found in Ruthia magnifica subsp. Calyptogena magnifica.